A 671-amino-acid chain; its full sequence is DNA ligase (671 aa).

NAD(+) is bound by residues 36-40, 85-86, and glutamate 116; these read DAEYD and SL. Residue lysine 118 is the N6-AMP-lysine intermediate of the active site. Residues arginine 139, glutamate 176, lysine 292, and lysine 316 each coordinate NAD(+). 4 residues coordinate Zn(2+): cysteine 410, cysteine 413, cysteine 428, and cysteine 434. The 81-residue stretch at 591-671 folds into the BRCT domain; sequence QKGGRFQGMT…QFLAMFSEKE (81 aa).

This sequence belongs to the NAD-dependent DNA ligase family. LigA subfamily. Mg(2+) is required as a cofactor. The cofactor is Mn(2+).

It carries out the reaction NAD(+) + (deoxyribonucleotide)n-3'-hydroxyl + 5'-phospho-(deoxyribonucleotide)m = (deoxyribonucleotide)n+m + AMP + beta-nicotinamide D-nucleotide.. Its function is as follows. DNA ligase that catalyzes the formation of phosphodiester linkages between 5'-phosphoryl and 3'-hydroxyl groups in double-stranded DNA using NAD as a coenzyme and as the energy source for the reaction. It is essential for DNA replication and repair of damaged DNA. This is DNA ligase from Acidithiobacillus ferrooxidans (strain ATCC 23270 / DSM 14882 / CIP 104768 / NCIMB 8455) (Ferrobacillus ferrooxidans (strain ATCC 23270)).